Here is a 130-residue protein sequence, read N- to C-terminus: Small ribosomal subunit protein uS11 (130 aa).

It belongs to the universal ribosomal protein uS11 family. In terms of assembly, part of the 30S ribosomal subunit. Interacts with proteins S7 and S18. Binds to IF-3.

Its function is as follows. Located on the platform of the 30S subunit, it bridges several disparate RNA helices of the 16S rRNA. Forms part of the Shine-Dalgarno cleft in the 70S ribosome. The polypeptide is Small ribosomal subunit protein uS11 (Prochlorococcus marinus (strain MIT 9215)).